Here is a 207-residue protein sequence, read N- to C-terminus: Cytochrome c oxidase subunit 3 (207 aa).

5 helical membrane passes run 28–48 (FLGF…LFAT), 70–90 (VVFM…YAIY), 102–122 (LWFG…IYEF), 144–164 (LVGT…TLMI), and 186–206 (WHFI…MGMV).

It belongs to the cytochrome c oxidase subunit 3 family.

It is found in the cell membrane. The enzyme catalyses 4 Fe(II)-[cytochrome c] + O2 + 8 H(+)(in) = 4 Fe(III)-[cytochrome c] + 2 H2O + 4 H(+)(out). The sequence is that of Cytochrome c oxidase subunit 3 (ctaE) from Bacillus sp. (strain PS3).